The following is a 433-amino-acid chain: Cell division protein FtsZ homolog 1, chloroplastic (433 aa).

A chloroplast-targeting transit peptide spans 1-66; the sequence is MAIIPLAQLN…TRSKSMRLRC (66 aa). Serine 67 carries the post-translational modification N-acetylserine. GTP-binding positions include 83–87, 170–172, glutamate 201, arginine 205, and aspartate 249; these read GGGNN and GTG. The interval 399–433 is disordered; the sequence is GSSGQQENKGMSLPHQKQSPSTISTKSSSPRRLFF. Over residues 414 to 433 the composition is skewed to low complexity; the sequence is QKQSPSTISTKSSSPRRLFF.

This sequence belongs to the FtsZ family. In terms of assembly, aggregates to form a contractile ring-like structure; contraction of the ring was accompanied by an increase in the filament turnover rate. This aggregation is regulated in midchloroplast stroma by MIND1 (repressor) and MINE1 (promoter). Self-interacts and binds to FTSZ2-1 in heteromers to form two morphologically distinct types of filaments, termed type-I (smooth filaments) and type-II (rough filaments), in a GTP-dependent manner. Interacts with ARC3. Part of a complex made of ARC3, ARC6, FTSZ1 and FTSZ2. As to expression, in pollen grain, restricted to plastids of vegetative cells. Also present in pollen tubes plastids.

It is found in the plastid. The protein resides in the chloroplast stroma. Its subcellular location is the chloroplast thylakoid membrane. Functionally, exhibits GTPase activity. Component of the plastid division machinery that forms a contractile ring at the division site. Required for plastid division in a dose-dependent manner. Involved in epidermal plastids division in a MINE1-dependent manner. Involved in blue light-induced chloroplast movements. May regulate thylakoid development. In the vegetative shoot apex, at the shoot apical meristem (SAM), where the proplastid-to-chloroplast transition takes place, contributes equally with FTSZ2-1 in the L2 layer to plastid division. This is Cell division protein FtsZ homolog 1, chloroplastic from Arabidopsis thaliana (Mouse-ear cress).